A 169-amino-acid chain; its full sequence is MPLLDSFKVDHTRMNAPAVRVAKTITTPKGDLITVFDLRFCRPNMEIMSSKGIHTLEHLYAGFMRDHLNSDKVEIIDISPMGCRTGFYMSLIGEPSAQAVANAWKNAMHDILTKVSDVTQIPELNIYQCGTFSEHSLEDAHQIARDVLAKGISVNLNEDLTLDEEWLNR.

Residues His-54, His-58, and Cys-129 each contribute to the Fe cation site.

It belongs to the LuxS family. Homodimer. Fe cation serves as cofactor.

It carries out the reaction S-(5-deoxy-D-ribos-5-yl)-L-homocysteine = (S)-4,5-dihydroxypentane-2,3-dione + L-homocysteine. Functionally, involved in the synthesis of autoinducer 2 (AI-2) which is secreted by bacteria and is used to communicate both the cell density and the metabolic potential of the environment. The regulation of gene expression in response to changes in cell density is called quorum sensing. Catalyzes the transformation of S-ribosylhomocysteine (RHC) to homocysteine (HC) and 4,5-dihydroxy-2,3-pentadione (DPD). This Haemophilus ducreyi (strain 35000HP / ATCC 700724) protein is S-ribosylhomocysteine lyase.